Reading from the N-terminus, the 106-residue chain is Secreted RxLR effector protein 18 (106 aa).

An N-terminal signal peptide occupies residues 1 to 17; it reads MRGSTAMLLAAIALFSS. The short motif at 28 to 39 is the RxLR-dEER element; that stretch reads RTLRSFEELEER.

This sequence belongs to the RxLR effector family.

It localises to the secreted. Its subcellular location is the host cell. Functionally, effector that may act as a suppressor of cell death to interrupt plant immunity. I. The chain is Secreted RxLR effector protein 18 from Plasmopara viticola (Downy mildew of grapevine).